The primary structure comprises 441 residues: Phosphoribosylamine--glycine ligase (441 aa).

An ATP-grasp domain is found at 112–319; the sequence is RNFMKKYGIE…FTEIMSAVVK (208 aa). 139-196 is an ATP binding site; that stretch reads IEKLGDVAVKPSGLTGGKGVKVMGDQLPDLKAAKDYTSELLEKGPVVIEERFIGEEFT. Mg(2+) is bound by residues Q277, E289, and N291. Mn(2+) is bound by residues Q277, E289, and N291.

The protein belongs to the GARS family. Mg(2+) serves as cofactor. The cofactor is Mn(2+).

The enzyme catalyses 5-phospho-beta-D-ribosylamine + glycine + ATP = N(1)-(5-phospho-beta-D-ribosyl)glycinamide + ADP + phosphate + H(+). Its pathway is purine metabolism; IMP biosynthesis via de novo pathway; N(1)-(5-phospho-D-ribosyl)glycinamide from 5-phospho-alpha-D-ribose 1-diphosphate: step 2/2. The polypeptide is Phosphoribosylamine--glycine ligase (Methanosarcina acetivorans (strain ATCC 35395 / DSM 2834 / JCM 12185 / C2A)).